Reading from the N-terminus, the 487-residue chain is 2-aminomuconic semialdehyde dehydrogenase (487 aa).

231–236 is a binding site for NAD(+); the sequence is GSQPTA. The Proton acceptor role is filled by Glu-253. Cys-287 acts as the Nucleophile in catalysis. Phosphoserine is present on Ser-362.

It belongs to the aldehyde dehydrogenase family. In terms of tissue distribution, detected in hepatocytes and in proximal and distal convoluted tubules in kidney cortex (at protein level). Highly expressed in adult liver and in kidney cortex. First detected in embryonic liver after 15 days of development.

It is found in the cytoplasm. It catalyses the reaction 2-aminomuconate 6-semialdehyde + NAD(+) + H2O = (2Z,4E)-2-aminomuconate + NADH + 2 H(+). The protein operates within amino-acid degradation; L-kynurenine degradation. Functionally, catalyzes the NAD-dependent oxidation of 2-aminomuconic semialdehyde of the kynurenine metabolic pathway in L-tryptophan degradation. This Mus musculus (Mouse) protein is 2-aminomuconic semialdehyde dehydrogenase (Aldh8a1).